Reading from the N-terminus, the 278-residue chain is MSMGWMEAGFLGLLQGLTEFLPVSSSAHLRIAGEFLPSGADPGAAFTAITQIGTEMAVLVYFWSDIMRIAAAWLRQNLRLGEYNKADARLGWLIIVGSVPIVFLGLFFKDAIEHSLRNLYITAVMLIVFGIVLGLADRIGEKRYKLNQLIWRDGILFGFAQAMALIPGVSRSGGTISAGLLLGYTREAAARYSFLLAVPAVFGSGFYQLFKSIGEDNPVGWGQTGLATLIAFIVGYAVIVVFLKLVSTKSYMPFVWYRVVIGFILLALLGTGVISAGG.

7 helical membrane passes run 43 to 63, 88 to 108, 119 to 139, 149 to 169, 194 to 214, 226 to 246, and 254 to 274; these read GAAFTAITQIGTEMAVLVYFW, ARLGWLIIVGSVPIVFLGLFF, LYITAVMLIVFGIVLGLADRI, LIWRDGILFGFAQAMALIPGV, FLLAVPAVFGSGFYQLFKSIG, LATLIAFIVGYAVIVVFLKLV, and FVWYRVVIGFILLALLGTGVI.

The protein belongs to the UppP family.

The protein resides in the cell inner membrane. The enzyme catalyses di-trans,octa-cis-undecaprenyl diphosphate + H2O = di-trans,octa-cis-undecaprenyl phosphate + phosphate + H(+). In terms of biological role, catalyzes the dephosphorylation of undecaprenyl diphosphate (UPP). Confers resistance to bacitracin. In Agrobacterium fabrum (strain C58 / ATCC 33970) (Agrobacterium tumefaciens (strain C58)), this protein is Undecaprenyl-diphosphatase 2.